A 117-amino-acid polypeptide reads, in one-letter code: UPF0342 protein BcerKBAB4_0767 (117 aa).

This sequence belongs to the UPF0342 family.

This Bacillus mycoides (strain KBAB4) (Bacillus weihenstephanensis) protein is UPF0342 protein BcerKBAB4_0767.